Reading from the N-terminus, the 585-residue chain is tRNA-guanine(15) transglycosylase (585 aa).

D95 functions as the Nucleophile in the catalytic mechanism. 2 residues coordinate substrate: D130 and A196. Residues C279, C281, and C284 each contribute to the Zn(2+) site. A PUA domain is found at 507–582 (VMRVVVNKEA…RAVKTRRGVE (76 aa)).

Belongs to the archaeosine tRNA-ribosyltransferase family. Zn(2+) is required as a cofactor.

The enzyme catalyses guanosine(15) in tRNA + 7-cyano-7-deazaguanine = 7-cyano-7-carbaguanosine(15) in tRNA + guanine. It functions in the pathway tRNA modification; archaeosine-tRNA biosynthesis. In terms of biological role, exchanges the guanine residue with 7-cyano-7-deazaguanine (preQ0) at position 15 in the dihydrouridine loop (D-loop) of archaeal tRNAs. The sequence is that of tRNA-guanine(15) transglycosylase from Pyrococcus furiosus (strain ATCC 43587 / DSM 3638 / JCM 8422 / Vc1).